The chain runs to 61 residues: uncharacterized protein (61 aa).

This is an uncharacterized protein from Homo sapiens (Human).